The primary structure comprises 307 residues: Serine/threonine-protein phosphatase 4 catalytic subunit (307 aa).

Asp54, His56, Asp82, and Asn114 together coordinate Mn(2+). The active-site Proton donor is His115. 2 residues coordinate Mn(2+): His164 and His238. The residue at position 307 (Leu307) is a Leucine methyl ester.

It belongs to the PPP phosphatase family. PP-4 (PP-X) subfamily. In terms of assembly, serine/threonine-protein phosphatase 4 (PP4) occurs in different assemblies of the catalytic and one or more regulatory subunits. Probably part of a PP4 PPP4C-PPP4R2-PPP4R3 complex containing Pp4-19C, PPP4R2r and flfl. Interacts with Ptpa; thereby mediating basal localization of the Miranda (Mira) complex; probably by dephosphorylation of Mira. It depends on Mn(2+) as a cofactor. Post-translationally, reversibly methyl esterified on Leu-307 by leucine carboxyl methyltransferase 1 (LCMT1) and protein phosphatase methylesterase 1 (PPME1). Carboxyl methylation influences the affinity of the catalytic subunit for the different regulatory subunits, thereby modulating the PP2A holoenzyme's substrate specificity, enzyme activity and cellular localization.

The protein resides in the cytoplasm. Its subcellular location is the nucleus. It is found in the cytoskeleton. It localises to the microtubule organizing center. The protein localises to the centrosome. It carries out the reaction O-phospho-L-seryl-[protein] + H2O = L-seryl-[protein] + phosphate. The enzyme catalyses O-phospho-L-threonyl-[protein] + H2O = L-threonyl-[protein] + phosphate. Functionally, protein phosphatase that regulates many processes such as microtubule organization at centrosomes. The probable PP4 complex Pp4-19C-PPP4R2r-flfl (PPP4C-PPP4R2-PPP4R3) is required to prevent caspase-induced cell death (in vitro). The chain is Serine/threonine-protein phosphatase 4 catalytic subunit (Pp4-19C) from Drosophila melanogaster (Fruit fly).